A 116-amino-acid chain; its full sequence is MKLSTFIIMISLAVALATWPSEHIEGSDSETKLNVELGPYALADRAEKGKDDSLNKGEPCQFHCECRGASVLCEAVYGTRSPMYKCMIKRLPISVLDIMYQAERALEKLASSFRCE.

The N-terminal stretch at 1–17 (MKLSTFIIMISLAVALA) is a signal peptide. Positions 18–50 (TWPSEHIEGSDSETKLNVELGPYALADRAEKGK) are excised as a propeptide.

It belongs to the neurotoxin 25 family. F7 subfamily. Contains 3 disulfide bonds. Expressed by the venom gland.

The protein localises to the secreted. This chain is U3-theraphotoxin-Lsp1a, found in Lasiodora sp. (strain IBSP 8539) (Brazilian salmon pink birdeater).